A 329-amino-acid polypeptide reads, in one-letter code: Serine/threonine-protein phosphatase PP1-alpha (329 aa).

Residues D64, H66, D92, and N124 each contribute to the Mn(2+) site. The active-site Proton donor is the H125. 2 residues coordinate Mn(2+): H173 and H248. The interval 309 to 329 (GMNSGRPAVGGGRPGTTAGKK) is disordered.

This sequence belongs to the PPP phosphatase family. PP-1 subfamily. In terms of assembly, interacts with lab-1; the interaction is direct. Interacts with knl-1; the interaction is direct. The cofactor is Mn(2+).

The catalysed reaction is O-phospho-L-seryl-[protein] + H2O = L-seryl-[protein] + phosphate. It carries out the reaction O-phospho-L-threonyl-[protein] + H2O = L-threonyl-[protein] + phosphate. In terms of biological role, serine/threonine-protein phosphatase which antagonizes the function of air-2 in the regulation of chromosome cohesion. Dephosphorylates histone H3 at 'Ser-10'. Dephosphorylates translation initiation factor eIF2alpha. Involved in the activation of chloride channel clh-3 during cell swelling and meiotic maturation. The protein is Serine/threonine-protein phosphatase PP1-alpha (gsp-1) of Caenorhabditis briggsae.